The sequence spans 163 residues: Probable phosphotransferase enzyme IIB component M6_Spy0801 (163 aa).

A PTS EIIB type-4 domain is found at 1–163; it reads MITQIRVDDR…TKVHLSQLVN (163 aa). The active-site Pros-phosphohistidine intermediate is His-13.

It localises to the cytoplasm. The phosphoenolpyruvate-dependent sugar phosphotransferase system (sugar PTS), a major carbohydrate active -transport system, catalyzes the phosphorylation of incoming sugar substrates concomitantly with their translocation across the cell membrane. The polypeptide is Probable phosphotransferase enzyme IIB component M6_Spy0801 (Streptococcus pyogenes serotype M6 (strain ATCC BAA-946 / MGAS10394)).